Reading from the N-terminus, the 510-residue chain is ETS translocation variant 5 (510 aa).

The tract at residues 131–208 (FKPLTPPTTP…QPLQMPKMMP (78 aa)) is disordered. Over residues 161 to 174 (GHAPAAGPVQGVGP) the composition is skewed to low complexity. The span at 175–185 (APAPHSLPEPG) shows a compositional bias: pro residues. Residue S248 is modified to Phosphoserine. A Glycyl lysine isopeptide (Lys-Gly) (interchain with G-Cter in SUMO2) cross-link involves residue K350. The ETS DNA-binding region spans 368–448 (LQLWQFLVTL…AGERYVYKFV (81 aa)).

In terms of assembly, interacts (via C-terminal) with ZMYM5 (via N-terminal 120 amino acid region). As to expression, ubiquitous.

It localises to the nucleus. In terms of biological role, binds to DNA sequences containing the consensus nucleotide core sequence 5'-GGAA.-3'. The protein is ETS translocation variant 5 (ETV5) of Homo sapiens (Human).